The sequence spans 585 residues: Pentatricopeptide repeat-containing protein At4g21170 (585 aa).

PPR repeat units follow at residues 152–186, 187–221, 222–247, 252–286, 287–321, 324–358, 360–394, 396–431, 432–466, 467–501, 502–534, and 538–572; these read LSVSLSLVLEYYALKGSHHNGLEVFGFMRRLRLSP, SQSAYNSLLGSLVKENQFRVALCLYSAMVRNGIVS, DELTWDLIAQILCEQGRSKSVFKLME, SCKIYTNLVECYSRNGEFDAVFSLIHEMDDKKLEL, SFCSYGCVLDDACRLGDAEFIDKVLCLMVEKKFVT, DSAVNDKIIERLCDMGKTFASEMLFRKACNGETVR, WDSTYGCMLKALSRKKRTKEAVDVYRMICRKGITV, DESCYIEFANALCRDDNSSEEEEELLVDVIKRGFVP, CTHKLSEVLASMCRKRRWKSAEKLLDSVMEMEVYF, DSFACGLLMERYCRSGKLEKALVLHEKIKKMKGSL, DVNAYNAVLDRLMMRQKEMVEEAVVVFEYMKEI, and NSKSFTIMIQGLCRVKEMKKAMRSHDEMLRLGLKP.

The protein belongs to the PPR family. P subfamily.

In Arabidopsis thaliana (Mouse-ear cress), this protein is Pentatricopeptide repeat-containing protein At4g21170.